A 225-amino-acid polypeptide reads, in one-letter code: UPF0758 protein BCQ_4241 (225 aa).

An MPN domain is found at Ser-103–Ile-225. Zn(2+)-binding residues include His-174, His-176, and Asp-187. The short motif at His-174–Asp-187 is the JAMM motif element.

This sequence belongs to the UPF0758 family.

The chain is UPF0758 protein BCQ_4241 from Bacillus cereus (strain Q1).